The primary structure comprises 487 residues: Wax ester synthase/diacylglycerol acyltransferase 3 (487 aa).

Residues 1 to 193 (MYTMKKGKDM…KHASSNKKSW (193 aa)) lie on the Cytoplasmic side of the membrane. The Proton acceptor role is filled by histidine 151. A helical membrane pass occupies residues 194–214 (WLVGRFWFMIRIIFTTVVELF). Topologically, residues 215 to 487 (KYLLTLCFMR…MEKGVHKMEV (273 aa)) are lumenal.

In the N-terminal section; belongs to the long-chain O-acyltransferase family. As to expression, mostly expressed in flowers and siliques.

The protein resides in the cell membrane. Its subcellular location is the endoplasmic reticulum membrane. It catalyses the reaction an acyl-CoA + a 1,2-diacyl-sn-glycerol = a triacyl-sn-glycerol + CoA. The enzyme catalyses a long chain fatty alcohol + a fatty acyl-CoA = a wax ester + CoA. It functions in the pathway glycerolipid metabolism; triacylglycerol biosynthesis. Its pathway is lipid metabolism. Functionally, bifunctional wax ester synthase/diacylglycerol acyltransferase. Involved in cuticular wax biosynthesis. This Arabidopsis thaliana (Mouse-ear cress) protein is Wax ester synthase/diacylglycerol acyltransferase 3.